The primary structure comprises 103 residues: Large ribosomal subunit protein bL21 (103 aa).

This sequence belongs to the bacterial ribosomal protein bL21 family. Part of the 50S ribosomal subunit. Contacts protein L20.

Its function is as follows. This protein binds to 23S rRNA in the presence of protein L20. This is Large ribosomal subunit protein bL21 from Acinetobacter baumannii (strain AB307-0294).